The following is a 469-amino-acid chain: Protopanaxadiol 6-hydroxylase (469 aa).

Residues 3 to 23 traverse the membrane as a helical segment; sequence LFISSQLLLLLVFCLFLFWNF. Cysteine 416 is a binding site for heme.

The protein belongs to the cytochrome P450 family. Requires heme as cofactor. Accumulates ubiquitously in all organs of plants, including roots, stems and leaves.

The protein resides in the membrane. It carries out the reaction (20S)-protopanaxadiol + reduced [NADPH--hemoprotein reductase] + O2 = (20S)-protopanaxatriol + oxidized [NADPH--hemoprotein reductase] + H2O + H(+). Its pathway is secondary metabolite biosynthesis; terpenoid biosynthesis. With respect to regulation, activated by N,N'-dicyclohexylcarbodiimide (DCCD) thus leading to increased ginsenosides accumulation. Functionally, component of the dammarane-type triterpene saponins (e.g. PPT-type ginsenosides or panaxosides) biosynthetic pathway. Catalyzes the formation of protopanaxatriol from protopanaxadiol during ginsenoside biosynthesis, a class of tetracyclic triterpenoid saponins. This chain is Protopanaxadiol 6-hydroxylase, found in Panax ginseng (Korean ginseng).